We begin with the raw amino-acid sequence, 172 residues long: Large ribosomal subunit protein uL10 (172 aa).

This sequence belongs to the universal ribosomal protein uL10 family. In terms of assembly, part of the ribosomal stalk of the 50S ribosomal subunit. The N-terminus interacts with L11 and the large rRNA to form the base of the stalk. The C-terminus forms an elongated spine to which L12 dimers bind in a sequential fashion forming a multimeric L10(L12)X complex.

Forms part of the ribosomal stalk, playing a central role in the interaction of the ribosome with GTP-bound translation factors. The chain is Large ribosomal subunit protein uL10 from Francisella tularensis subsp. mediasiatica (strain FSC147).